A 555-amino-acid polypeptide reads, in one-letter code: Formate--tetrahydrofolate ligase (555 aa).

65–72 is an ATP binding site; the sequence is TPAGEGKS.

Belongs to the formate--tetrahydrofolate ligase family.

It carries out the reaction (6S)-5,6,7,8-tetrahydrofolate + formate + ATP = (6R)-10-formyltetrahydrofolate + ADP + phosphate. It functions in the pathway one-carbon metabolism; tetrahydrofolate interconversion. The polypeptide is Formate--tetrahydrofolate ligase (Staphylococcus aureus (strain NCTC 8325 / PS 47)).